A 284-amino-acid chain; its full sequence is Bifunctional protein FolD (284 aa).

NADP(+)-binding positions include 166–168 and Ser-191; that span reads GRS.

This sequence belongs to the tetrahydrofolate dehydrogenase/cyclohydrolase family. As to quaternary structure, homodimer.

The catalysed reaction is (6R)-5,10-methylene-5,6,7,8-tetrahydrofolate + NADP(+) = (6R)-5,10-methenyltetrahydrofolate + NADPH. The enzyme catalyses (6R)-5,10-methenyltetrahydrofolate + H2O = (6R)-10-formyltetrahydrofolate + H(+). It functions in the pathway one-carbon metabolism; tetrahydrofolate interconversion. In terms of biological role, catalyzes the oxidation of 5,10-methylenetetrahydrofolate to 5,10-methenyltetrahydrofolate and then the hydrolysis of 5,10-methenyltetrahydrofolate to 10-formyltetrahydrofolate. This Delftia acidovorans (strain DSM 14801 / SPH-1) protein is Bifunctional protein FolD.